Here is a 450-residue protein sequence, read N- to C-terminus: Molybdate-anion transporter (450 aa).

12 helical membrane-spanning segments follow: residues 1–21, 43–63, 79–99, 128–148, 176–196, 198–218, 249–269, 278–298, 311–331, 344–364, 376–396, and 409–429; these read MLVTAYLAFVVLLASCLGLEL, LDFYQVYFLALAADWLQAPYL, ILYVCGLASTVLFGLVASSLV, FVLLVGRALGGLSTALLFSAF, FWNHVLAVAAGVAAEAVACWM, LGPVAPFVAAIPLLALAGALA, VLLLGTIQALFESVIFIFVFL, GAPLGIIFSSFMAASLLGSSL, PMHLLSLAVLIVVFSLFMLTF, FIAFLLIELACGLYFPSMSFL, GVLNWFRVPLHLLACLGLLVL, and FSICSAVMVMALLAVVGLFTV.

Belongs to the major facilitator superfamily.

Its subcellular location is the cell membrane. Functionally, mediates high-affinity intracellular uptake of the rare oligo-element molybdenum. In Bos taurus (Bovine), this protein is Molybdate-anion transporter (MFSD5).